A 699-amino-acid polypeptide reads, in one-letter code: LMBR1 domain-containing protein 2 homolog (699 aa).

Topologically, residues 1 to 3 are extracellular; sequence MAY. The chain crosses the membrane as a helical span at residues 4-26; that stretch reads LLTFGIIAALCLASISLYRYGNI. The Cytoplasmic portion of the chain corresponds to 27–30; the sequence is PRQH. A helical transmembrane segment spans residues 31 to 51; that stretch reads ILVTLSVLTAWCFSFLIVFTI. At 52-106 the chain is on the extracellular side; it reads PLDVTSTLYRQCLAEHKLALDAAGNASTTANITPPPECQEPWGMVPESVFPNLWR. Residue Asn-76 is glycosylated (N-linked (GlcNAc...) asparagine). Residues 107-127 form a helical membrane-spanning segment; it reads IIYWSSQFLTWLIMPLMQSYL. Residues 128–144 are Cytoplasmic-facing; sequence KAGDFTIKGKLKSALIE. Residues 145-165 form a helical membrane-spanning segment; it reads NAIYYGSYLFICGVLLIYIAV. Residues 166–181 lie on the Extracellular side of the membrane; the sequence is KGVPLDWQKLKAIASS. A helical membrane pass occupies residues 182-202; the sequence is ASNTWGLFLLILLLGYALVEV. Over 203–381 the chain is Cytoplasmic; that stretch reads PRSLWNNAKP…ECLLKAPFLK (179 aa). Residues 382–402 form a helical membrane-spanning segment; sequence TLCVVTATMSAMVVWSEVTFF. The Extracellular portion of the chain corresponds to 403–426; the sequence is SRDPVLSIFANVIYLAKESYDFFT. Residues 427 to 447 form a helical membrane-spanning segment; sequence IEVFSMMVLCYFFYCTYSTIL. Residues 448 to 467 are Cytoplasmic-facing; sequence RIRFLNLYYLAPHHQTNEHS. The helical transmembrane segment at 468–488 threads the bilayer; it reads LIFSGMLLCRLTPPMCLNFLG. Topologically, residues 489 to 514 are extracellular; that stretch reads LIHMDSHIIPERMMETYYTRIMGHMD. The chain crosses the membrane as a helical span at residues 515–535; sequence VIGIISNGFNIYFPMCMLAFC. Over 536 to 699 the chain is Cytoplasmic; sequence LSTWFSLGSR…PPPRGLFDDV (164 aa). The stretch at 564–592 forms a coiled coil; it reads ELVQEGKDLIAREKRRRQRAEEAMARRRD. The segment at 669 to 699 is disordered; it reads FRGTSELDPDYEAENERRIVGPPPRGLFDDV.

This sequence belongs to the LIMR family.

The protein resides in the membrane. In Drosophila pseudoobscura pseudoobscura (Fruit fly), this protein is LMBR1 domain-containing protein 2 homolog.